Reading from the N-terminus, the 448-residue chain is MLEGYRGKALEFLSSHNVDVGDLIELQKDGLSIKGVVMPSYSKEDDIIVIKLDNGYNIGVSISGISNFKLVEKKRQNIQVNKGEQKPLKEKSEVKIISTGGTIVSKVEYETGAVRPALTTEEIINFMPEINEIAKIDAEVLFSILSENMKPEYWIKIAESAKKALDEGNLGVVIAHGTDTMAYTASALAFSFKSLTGPIVLVGSQRSSDRPSSDSPINLYSAILVAKNSPFAEVTINMHGESSDTYTLVHRGVKVRKMHTSRRDAFQSINDIPLAKVFWKEKEIKLLRNDYIKRKEENALDAKFDTRVFLLKYYPGINPEIIEYLISSGIRGIIVEGTGLGHTSTEFVDYFKKATKDGVFIGMTSQCLFGRVNMNVYTTGRLLQESGVTPLEDMLPETALVKLMWVLAHESDLDKIRSLMLTNFVGEINYRHVPEYFPRWFHDGIRLQ.

In terms of domain architecture, Asparaginase/glutaminase spans 92 to 423; that stretch reads SEVKIISTGG…DKIRSLMLTN (332 aa). Residues threonine 102, threonine 178, aspartate 179, and lysine 257 contribute to the active site.

The protein belongs to the asparaginase 1 family. GatD subfamily. Heterodimer of GatD and GatE.

The catalysed reaction is L-glutamyl-tRNA(Gln) + L-glutamine + ATP + H2O = L-glutaminyl-tRNA(Gln) + L-glutamate + ADP + phosphate + H(+). Allows the formation of correctly charged Gln-tRNA(Gln) through the transamidation of misacylated Glu-tRNA(Gln) in organisms which lack glutaminyl-tRNA synthetase. The reaction takes place in the presence of glutamine and ATP through an activated gamma-phospho-Glu-tRNA(Gln). The GatDE system is specific for glutamate and does not act on aspartate. The protein is Glutamyl-tRNA(Gln) amidotransferase subunit D of Sulfurisphaera tokodaii (strain DSM 16993 / JCM 10545 / NBRC 100140 / 7) (Sulfolobus tokodaii).